The following is a 159-amino-acid chain: Large ribosomal subunit protein uL10 (159 aa).

This sequence belongs to the universal ribosomal protein uL10 family. As to quaternary structure, part of the ribosomal stalk of the 50S ribosomal subunit. The N-terminus interacts with L11 and the large rRNA to form the base of the stalk. The C-terminus forms an elongated spine to which L12 dimers bind in a sequential fashion forming a multimeric L10(L12)X complex.

Forms part of the ribosomal stalk, playing a central role in the interaction of the ribosome with GTP-bound translation factors. The sequence is that of Large ribosomal subunit protein uL10 from Sulfurimonas denitrificans (strain ATCC 33889 / DSM 1251) (Thiomicrospira denitrificans (strain ATCC 33889 / DSM 1251)).